Here is a 407-residue protein sequence, read N- to C-terminus: Phosphopentomutase (407 aa).

Residues aspartate 10, aspartate 306, histidine 311, aspartate 347, histidine 348, and histidine 359 each contribute to the Mn(2+) site.

It belongs to the phosphopentomutase family. Mn(2+) is required as a cofactor.

Its subcellular location is the cytoplasm. The enzyme catalyses 2-deoxy-alpha-D-ribose 1-phosphate = 2-deoxy-D-ribose 5-phosphate. It carries out the reaction alpha-D-ribose 1-phosphate = D-ribose 5-phosphate. The protein operates within carbohydrate degradation; 2-deoxy-D-ribose 1-phosphate degradation; D-glyceraldehyde 3-phosphate and acetaldehyde from 2-deoxy-alpha-D-ribose 1-phosphate: step 1/2. Its function is as follows. Isomerase that catalyzes the conversion of deoxy-ribose 1-phosphate (dRib-1-P) and ribose 1-phosphate (Rib-1-P) to deoxy-ribose 5-phosphate (dRib-5-P) and ribose 5-phosphate (Rib-5-P), respectively. The chain is Phosphopentomutase from Edwardsiella ictaluri (strain 93-146).